A 276-amino-acid chain; its full sequence is NADPH-dependent 7-cyano-7-deazaguanine reductase (276 aa).

Residue 83–85 participates in substrate binding; the sequence is IES. 85–86 contributes to the NADPH binding site; the sequence is SK. The Thioimide intermediate role is filled by cysteine 184. Residue aspartate 191 is the Proton donor of the active site. Position 223–224 (223–224) interacts with substrate; that stretch reads HE. Residue 252-253 coordinates NADPH; that stretch reads RG.

Belongs to the GTP cyclohydrolase I family. QueF type 2 subfamily. Homodimer.

Its subcellular location is the cytoplasm. The catalysed reaction is 7-aminomethyl-7-carbaguanine + 2 NADP(+) = 7-cyano-7-deazaguanine + 2 NADPH + 3 H(+). Its pathway is tRNA modification; tRNA-queuosine biosynthesis. In terms of biological role, catalyzes the NADPH-dependent reduction of 7-cyano-7-deazaguanine (preQ0) to 7-aminomethyl-7-deazaguanine (preQ1). The sequence is that of NADPH-dependent 7-cyano-7-deazaguanine reductase from Pseudomonas putida (strain ATCC 700007 / DSM 6899 / JCM 31910 / BCRC 17059 / LMG 24140 / F1).